Reading from the N-terminus, the 340-residue chain is Dof zinc finger protein DOF2.2 (340 aa).

Positions Pro12 to Glu33 are disordered. The Dof-type zinc finger occupies Leu94–Lys148. Zn(2+)-binding residues include Cys96, Cys99, Cys121, and Cys124. 2 disordered regions span residues Pro138 to Val180 and Gly301 to Met340. Residues Ser151–Ser165 show a composition bias toward low complexity. Polar residues-rich tracts occupy residues Thr166–Val180 and Gly309–Ser331.

The protein localises to the nucleus. Functionally, transcription factor that binds specifically to a 5'-AA[AG]G-3' consensus core sequence. The protein is Dof zinc finger protein DOF2.2 (DOF2.2) of Arabidopsis thaliana (Mouse-ear cress).